Reading from the N-terminus, the 168-residue chain is Large ribosomal subunit protein uL10 (168 aa).

It belongs to the universal ribosomal protein uL10 family. As to quaternary structure, part of the ribosomal stalk of the 50S ribosomal subunit. The N-terminus interacts with L11 and the large rRNA to form the base of the stalk. The C-terminus forms an elongated spine to which L12 dimers bind in a sequential fashion forming a multimeric L10(L12)X complex.

In terms of biological role, forms part of the ribosomal stalk, playing a central role in the interaction of the ribosome with GTP-bound translation factors. In Ralstonia pickettii (strain 12J), this protein is Large ribosomal subunit protein uL10.